The following is a 110-amino-acid chain: Hydrogenase maturation factor HypA (110 aa).

His-2 serves as a coordination point for Ni(2+). Cys-70, Cys-73, Cys-86, and Cys-89 together coordinate Zn(2+).

This sequence belongs to the HypA/HybF family.

Its function is as follows. Involved in the maturation of [NiFe] hydrogenases. Required for nickel insertion into the metal center of the hydrogenase. The protein is Hydrogenase maturation factor HypA of Geobacter metallireducens (strain ATCC 53774 / DSM 7210 / GS-15).